The following is a 310-amino-acid chain: p-hydroxybenzoic acid efflux pump subunit AaeA (310 aa).

The helical transmembrane segment at 12–32 (AITLVLVILAFIAIFRAWVYY) threads the bilayer.

The protein belongs to the membrane fusion protein (MFP) (TC 8.A.1) family.

The protein localises to the cell inner membrane. Its function is as follows. Forms an efflux pump with AaeB. The sequence is that of p-hydroxybenzoic acid efflux pump subunit AaeA from Citrobacter koseri (strain ATCC BAA-895 / CDC 4225-83 / SGSC4696).